Consider the following 220-residue polypeptide: Putative NAD(P)H nitroreductase (220 aa).

Position 155-160 (155-160 (GASALG)) interacts with NAD(+).

It belongs to the nitroreductase family. Requires FMN as cofactor.

In Haemophilus influenzae (strain ATCC 51907 / DSM 11121 / KW20 / Rd), this protein is Putative NAD(P)H nitroreductase.